A 673-amino-acid polypeptide reads, in one-letter code: UvrABC system protein B (673 aa).

One can recognise a Helicase ATP-binding domain in the interval Glu-26–Arg-183. Gly-39 to Thr-46 is a binding site for ATP. Residues Tyr-92–Val-115 carry the Beta-hairpin motif. In terms of domain architecture, Helicase C-terminal spans Gln-431 to Leu-597. The UVR domain occupies Gln-633–Leu-668.

The protein belongs to the UvrB family. As to quaternary structure, forms a heterotetramer with UvrA during the search for lesions. Interacts with UvrC in an incision complex.

The protein resides in the cytoplasm. The UvrABC repair system catalyzes the recognition and processing of DNA lesions. A damage recognition complex composed of 2 UvrA and 2 UvrB subunits scans DNA for abnormalities. Upon binding of the UvrA(2)B(2) complex to a putative damaged site, the DNA wraps around one UvrB monomer. DNA wrap is dependent on ATP binding by UvrB and probably causes local melting of the DNA helix, facilitating insertion of UvrB beta-hairpin between the DNA strands. Then UvrB probes one DNA strand for the presence of a lesion. If a lesion is found the UvrA subunits dissociate and the UvrB-DNA preincision complex is formed. This complex is subsequently bound by UvrC and the second UvrB is released. If no lesion is found, the DNA wraps around the other UvrB subunit that will check the other stand for damage. This Salmonella heidelberg (strain SL476) protein is UvrABC system protein B.